The sequence spans 544 residues: Chitin-inducible gibberellin-responsive protein 2 (544 aa).

The disordered stretch occupies residues methionine 1–proline 123. 3 stretches are compositionally biased toward polar residues: residues asparagine 15–proline 30, serine 63–serine 74, and proline 86–glutamine 101. Positions arginine 165 to histidine 544 constitute a GRAS domain. The leucine repeat I (LRI) stretch occupies residues glycine 172–serine 232. The VHIID stretch occupies residues methionine 251–glycine 316. The short motif at isoleucine 282 to aspartate 286 is the VHIID element. Positions leucine 332–histidine 364 are leucine repeat II (LRII). A PFYRE region spans residues leucine 373–asparagine 467. The SAW stretch occupies residues alanine 470 to histidine 544.

Belongs to the GRAS family.

The protein localises to the nucleus. Functionally, may play a regulatory role in the early step of oligosaccharide elicitor response, downstream of the membrane-associated high-affinity chitin-binding protein. In Oryza sativa subsp. japonica (Rice), this protein is Chitin-inducible gibberellin-responsive protein 2 (CIGR2).